Reading from the N-terminus, the 278-residue chain is TnpB-like protein MJ0751 (278 aa).

4 residues coordinate Zn(2+): Cys-222, Cys-225, Cys-239, and Cys-242.

In the N-terminal section; belongs to the transposase 2 family. It in the C-terminal section; belongs to the transposase 35 family.

This is TnpB-like protein MJ0751 from Methanocaldococcus jannaschii (strain ATCC 43067 / DSM 2661 / JAL-1 / JCM 10045 / NBRC 100440) (Methanococcus jannaschii).